Consider the following 273-residue polypeptide: Small ribosomal subunit protein uS2 (273 aa).

The disordered stretch occupies residues 244-273; sequence SDEEANSSAEENENRQEDLLAKKYDSSEAN. Over residues 255–273 the composition is skewed to basic and acidic residues; that stretch reads NENRQEDLLAKKYDSSEAN.

The protein belongs to the universal ribosomal protein uS2 family.

This Chlamydia felis (strain Fe/C-56) (Chlamydophila felis) protein is Small ribosomal subunit protein uS2.